The primary structure comprises 90 residues: Conotoxin Ca8.2 (90 aa).

A signal peptide spans 1-21 (MMLKMGAMFVLLLLFILPSSQ). Positions 22–46 (QEGDVQARKTHLKRGFYGTLAMSTR) are excised as a propeptide. A Glutamine amide modification is found at Gln89.

It belongs to the conotoxin S superfamily. Contains 5 disulfide bonds. As to expression, expressed by the venom duct.

It is found in the secreted. This chain is Conotoxin Ca8.2, found in Conus caracteristicus (Characteristic cone).